The primary structure comprises 374 residues: Phosphoserine aminotransferase (374 aa).

L-glutamate is bound at residue Arg-46. Pyridoxal 5'-phosphate is bound by residues 80-81 (AT), Phe-104, Thr-150, Asp-174, and Gln-197. At Lys-198 the chain carries N6-(pyridoxal phosphate)lysine. Residue 249–250 (NT) participates in pyridoxal 5'-phosphate binding.

The protein belongs to the class-V pyridoxal-phosphate-dependent aminotransferase family. SerC subfamily. Homodimer. Pyridoxal 5'-phosphate is required as a cofactor.

It localises to the cytoplasm. It carries out the reaction O-phospho-L-serine + 2-oxoglutarate = 3-phosphooxypyruvate + L-glutamate. The enzyme catalyses 4-(phosphooxy)-L-threonine + 2-oxoglutarate = (R)-3-hydroxy-2-oxo-4-phosphooxybutanoate + L-glutamate. Its pathway is amino-acid biosynthesis; L-serine biosynthesis; L-serine from 3-phospho-D-glycerate: step 2/3. It participates in cofactor biosynthesis; pyridoxine 5'-phosphate biosynthesis; pyridoxine 5'-phosphate from D-erythrose 4-phosphate: step 3/5. Functionally, catalyzes the reversible conversion of 3-phosphohydroxypyruvate to phosphoserine and of 3-hydroxy-2-oxo-4-phosphonooxybutanoate to phosphohydroxythreonine. This Nocardioides sp. (strain ATCC BAA-499 / JS614) protein is Phosphoserine aminotransferase.